Here is a 338-residue protein sequence, read N- to C-terminus: Protein RecA (338 aa).

66 to 73 is an ATP binding site; that stretch reads GPESSGKT.

Belongs to the RecA family.

The protein resides in the cytoplasm. In terms of biological role, can catalyze the hydrolysis of ATP in the presence of single-stranded DNA, the ATP-dependent uptake of single-stranded DNA by duplex DNA, and the ATP-dependent hybridization of homologous single-stranded DNAs. It interacts with LexA causing its activation and leading to its autocatalytic cleavage. In Geobacter sulfurreducens (strain ATCC 51573 / DSM 12127 / PCA), this protein is Protein RecA.